A 362-amino-acid chain; its full sequence is DNA replication and repair protein RecF (362 aa).

30–37 (GLNAQGKS) serves as a coordination point for ATP.

This sequence belongs to the RecF family.

It localises to the cytoplasm. In terms of biological role, the RecF protein is involved in DNA metabolism; it is required for DNA replication and normal SOS inducibility. RecF binds preferentially to single-stranded, linear DNA. It also seems to bind ATP. This Thermoanaerobacter sp. (strain X514) protein is DNA replication and repair protein RecF.